A 583-amino-acid polypeptide reads, in one-letter code: 2-succinyl-5-enolpyruvyl-6-hydroxy-3-cyclohexene-1-carboxylate synthase (583 aa).

The protein belongs to the TPP enzyme family. MenD subfamily. In terms of assembly, homodimer. The cofactor is Mg(2+). Requires Mn(2+) as cofactor. Thiamine diphosphate is required as a cofactor.

It carries out the reaction isochorismate + 2-oxoglutarate + H(+) = 5-enolpyruvoyl-6-hydroxy-2-succinyl-cyclohex-3-ene-1-carboxylate + CO2. It functions in the pathway quinol/quinone metabolism; 1,4-dihydroxy-2-naphthoate biosynthesis; 1,4-dihydroxy-2-naphthoate from chorismate: step 2/7. Its pathway is quinol/quinone metabolism; menaquinone biosynthesis. In terms of biological role, catalyzes the thiamine diphosphate-dependent decarboxylation of 2-oxoglutarate and the subsequent addition of the resulting succinic semialdehyde-thiamine pyrophosphate anion to isochorismate to yield 2-succinyl-5-enolpyruvyl-6-hydroxy-3-cyclohexene-1-carboxylate (SEPHCHC). The chain is 2-succinyl-5-enolpyruvyl-6-hydroxy-3-cyclohexene-1-carboxylate synthase from Chlorobium chlorochromatii (strain CaD3).